A 736-amino-acid chain; its full sequence is Subtilisin-like protease SBT4.6 (736 aa).

A signal peptide spans 1 to 24 (MATAVSYCLLSCIFALLVVSFASA). A propeptide spans 25-111 (GKDDQDKQVY…VFPSKNLNLQ (87 aa)) (activation peptide). In terms of domain architecture, Inhibitor I9 spans 33–110 (VYIVYMGALP…SVFPSKNLNL (78 aa)). The 475-residue stretch at 115 to 589 (SWNFMGLKEG…AGHVDPIAAI (475 aa)) folds into the Peptidase S8 domain. The active-site Charge relay system is the Asp143. Asn174 is a glycosylation site (N-linked (GlcNAc...) asparagine). The Charge relay system role is filled by His204. Residue Asn227 is glycosylated (N-linked (GlcNAc...) asparagine). Positions 362-442 (KYPLVYGKSA…PVSVLSEDDY (81 aa)) constitute a PA domain. N-linked (GlcNAc...) asparagine glycosylation is present at Asn450. The active-site Charge relay system is Ser527. 4 N-linked (GlcNAc...) asparagine glycosylation sites follow: Asn564, Asn598, Asn610, and Asn668.

The protein belongs to the peptidase S8 family. Post-translationally, the C-terminal propeptide is autocleaved.

The protein resides in the secreted. In Arabidopsis thaliana (Mouse-ear cress), this protein is Subtilisin-like protease SBT4.6.